Here is a 330-residue protein sequence, read N- to C-terminus: Phosphate acyltransferase (330 aa).

Belongs to the PlsX family. As to quaternary structure, homodimer. Probably interacts with PlsY.

The protein resides in the cytoplasm. The catalysed reaction is a fatty acyl-[ACP] + phosphate = an acyl phosphate + holo-[ACP]. It functions in the pathway lipid metabolism; phospholipid metabolism. Its function is as follows. Catalyzes the reversible formation of acyl-phosphate (acyl-PO(4)) from acyl-[acyl-carrier-protein] (acyl-ACP). This enzyme utilizes acyl-ACP as fatty acyl donor, but not acyl-CoA. The chain is Phosphate acyltransferase from Teredinibacter turnerae (strain ATCC 39867 / T7901).